The primary structure comprises 331 residues: UPF0324 membrane protein SACOL0411 (331 aa).

Transmembrane regions (helical) follow at residues 9 to 26 (FMIG…SFLA), 31 to 48 (ILDK…AILY), 69 to 88 (LLRF…DIIG), 93 to 115 (LLAI…NKLL), 122 to 144 (ALLL…APIF), 154 to 176 (SIGI…YAIF), 183 to 202 (YGAW…LAGG), 217 to 234 (LGRV…ILIM), 247 to 269 (ISIP…VTIP), 273 to 295 (LNIL…GLNV), and 308 to 330 (LMTI…HWLY).

This sequence belongs to the UPF0324 family.

The protein localises to the cell membrane. This is UPF0324 membrane protein SACOL0411 from Staphylococcus aureus (strain COL).